A 711-amino-acid chain; its full sequence is Ferric reductase transmembrane component 3 (711 aa).

Residues 1-20 (MYWVLLCGSILLCCLSGASA) form the signal peptide. Topologically, residues 21-166 (SPAKTKMYGK…YANYDIGHTY (146 aa)) are extracellular. 4 N-linked (GlcNAc...) asparagine glycosylation sites follow: Asn-85, Asn-108, Asn-120, and Asn-134. A helical membrane pass occupies residues 167–187 (GGIICAYFVGVMILASILHYL). Topologically, residues 188-237 (SYTPFKTALFKQRLVRYVRRYLTIPTIWGKHASSFSYLKIFTGFLPTRSE) are cytoplasmic. Residues 238 to 258 (GVIILGYLVLHTVFLAYGYQY) form a helical membrane-spanning segment. Residues 259 to 280 (DPYNLIFDSRREQIARYVADRS) are Extracellular-facing. Residues 280–414 (SGVLAFAHFP…SGIEWIYAAI (135 aa)) enclose the Ferric oxidoreductase domain. A helical transmembrane segment spans residues 281–301 (GVLAFAHFPLIALFAGRNNFL). Residues 302–321 (EFISGVKYTSFIMFHKWLGR) lie on the Cytoplasmic side of the membrane. His-316 and His-330 together coordinate heme. A helical membrane pass occupies residues 322–341 (MMFLDAVIHGAAYTSYSVFY). At 342–353 (KDWAASKEETYW) the chain is on the extracellular side. The helical transmembrane segment at 354–374 (QFGVAALCIVGVMVFFSLAMF) threads the bilayer. Over 375 to 376 (RK) the chain is Cytoplasmic. A helical transmembrane segment spans residues 377 to 397 (FFYEAFLFLHIVLGALFFYTC). His-386 serves as a coordination point for heme. Residue Trp-398 is a topological domain, extracellular. The chain crosses the membrane as a helical span at residues 399-419 (EHVVELSGIEWIYAAIAIWTI). Heme is bound at residue His-400. One can recognise an FAD-binding FR-type domain in the interval 415–534 (AIWTIDRLIR…EGPYGSSSPV (120 aa)). Topologically, residues 420–711 (DRLIRIVRVS…IEYFEEYQSW (292 aa)) are cytoplasmic. Residue 479-485 (HPFTVLD) participates in FAD binding. NADP(+)-binding positions include 526 to 529 (GPYG) and 677 to 678 (CG).

It belongs to the ferric reductase (FRE) family. Requires FAD as cofactor. It depends on heme as a cofactor.

The protein resides in the cell membrane. It carries out the reaction 2 a Fe(II)-siderophore + NADP(+) + H(+) = 2 a Fe(III)-siderophore + NADPH. Its function is as follows. Siderophore-iron reductase responsible for reducing extracellular iron prior to import. Catalyzes the reductive uptake of Fe(3+) bound to di- and trihydroxamate siderophores. Fe(3+) is reduced to Fe(2+), which then dissociates from the siderophore and can be imported by the high-affinity Fe(2+) transport complex in the plasma membrane. The sequence is that of Ferric reductase transmembrane component 3 (FRE3) from Saccharomyces cerevisiae (strain ATCC 204508 / S288c) (Baker's yeast).